Reading from the N-terminus, the 311-residue chain is Acetaldehyde dehydrogenase 2 (311 aa).

11–14 (SGNI) provides a ligand contact to NAD(+). Cys131 functions as the Acyl-thioester intermediate in the catalytic mechanism. NAD(+)-binding positions include 162–170 (SAGPGTRAN) and Asn289.

This sequence belongs to the acetaldehyde dehydrogenase family.

It catalyses the reaction acetaldehyde + NAD(+) + CoA = acetyl-CoA + NADH + H(+). The chain is Acetaldehyde dehydrogenase 2 (mhpF) from Azotobacter vinelandii (strain DJ / ATCC BAA-1303).